Reading from the N-terminus, the 307-residue chain is N-acetylmuramic acid 6-phosphate etherase (307 aa).

The 164-residue stretch at 59–222 (TADRLRQGGR…STGVMVKLGK (164 aa)) folds into the SIS domain. The active-site Proton donor is Glu87. The active site involves Glu118.

It belongs to the GCKR-like family. MurNAc-6-P etherase subfamily. In terms of assembly, homodimer.

The catalysed reaction is N-acetyl-D-muramate 6-phosphate + H2O = N-acetyl-D-glucosamine 6-phosphate + (R)-lactate. Its pathway is amino-sugar metabolism; N-acetylmuramate degradation. Specifically catalyzes the cleavage of the D-lactyl ether substituent of MurNAc 6-phosphate, producing GlcNAc 6-phosphate and D-lactate. This is N-acetylmuramic acid 6-phosphate etherase from Trichormus variabilis (strain ATCC 29413 / PCC 7937) (Anabaena variabilis).